Consider the following 1221-residue polypeptide: Probable serine/threonine-protein kinase DDB_G0286465 (1221 aa).

3 disordered regions span residues 1–37 (MTLR…SPYT), 104–133 (FSPS…NDNQ), and 173–263 (ENNS…NNNE). 4 stretches are compositionally biased toward low complexity: residues 24–37 (SSVS…SPYT), 112–127 (KNNN…NNNY), 173–192 (ENNS…NMQK), and 204–263 (NNNN…NNNE). Residues 186–627 (INNNMQKTGG…PYKLLDHPFF (442 aa)) form the Protein kinase domain. 192-200 (KTGGRNGSV) lines the ATP pocket. Position 271 (Lys-271) interacts with ATP. The segment covering 324 to 344 (NVNNNNSNNNNNNSNNNITNS) has biased composition (low complexity). The disordered stretch occupies residues 324-346 (NVNNNNSNNNNNNSNNNITNSRY). Asp-448 (proton acceptor) is an active-site residue. Composition is skewed to low complexity over residues 538–550 (SPSS…TSTS) and 559–584 (DSSS…SLPK). 5 disordered regions span residues 538–604 (SPSS…PEKR), 712–782 (PNLS…KEKL), 823–858 (KFEK…PPLP), 959–1008 (KENI…SYCN), and 1105–1152 (KKQE…QQEK). The span at 591-604 (RSKDNQSKLDPEKR) shows a compositional bias: basic and acidic residues. Over residues 725–738 (KKQLQQYQQQQKQQ) the composition is skewed to low complexity. Residues 746–756 (DDEEEKEEEEK) show a composition bias toward acidic residues. Basic and acidic residues-rich tracts occupy residues 757–769 (EKEK…KEKE) and 823–850 (KFEK…KDDA). Low complexity predominate over residues 959 to 993 (KENIINFHNNNNNNNNNNNNNNNNNNNNNNNNNNN).

The protein belongs to the protein kinase superfamily. Ser/Thr protein kinase family.

It catalyses the reaction L-seryl-[protein] + ATP = O-phospho-L-seryl-[protein] + ADP + H(+). The enzyme catalyses L-threonyl-[protein] + ATP = O-phospho-L-threonyl-[protein] + ADP + H(+). In Dictyostelium discoideum (Social amoeba), this protein is Probable serine/threonine-protein kinase DDB_G0286465.